The sequence spans 392 residues: Frizzled-9 (392 aa).

The Extracellular portion of the chain corresponds to 1-35 (ACDNPEKFQYVEKSLSCAPRCSPGVDVYWSREDKD). The helical transmembrane segment at 36–56 (FAFVWMAVWSTLCFVSTAFTV) threads the bilayer. Over 57–72 (LTFLLDPHRFQYPERP) the chain is Cytoplasmic. The chain crosses the membrane as a helical span at residues 73–93 (IIFLSMCYNVYSVAFIIRSVA). Over 94–119 (GAETIACDRENGELYIIQEGLESTGC) the chain is Extracellular. Residues 120-140 (TIVFLILYYFGMASSLWWVVL) form a helical membrane-spanning segment. Residues 141 to 161 (TLTWFLAAGKKWGHEAIEAHS) lie on the Cytoplasmic side of the membrane. A helical transmembrane segment spans residues 162–182 (SYFHMAAWGIPAMKTIVILTM). The Extracellular segment spans residues 183–206 (RKVAGDELTGLCYVGSMDVSALTG). A helical membrane pass occupies residues 207-227 (FVLIPLSCYLVVGTSFILTGF). Topologically, residues 228 to 253 (VALFHIRKIMKTGGTNTEKLEKLMVK) are cytoplasmic. The chain crosses the membrane as a helical span at residues 254–274 (IGVFSILYTVPATCVIVCYFY). Topologically, residues 275–312 (ERLNVDYWNLRALERACVPLPGRRAADCSLEASVPTVA) are extracellular. The chain crosses the membrane as a helical span at residues 313–333 (VFMLKIFMSLVVGITSGVWVW). Topologically, residues 334–392 (SSKTLQTWQSLCNRKLGVRTRGKPCSGVSCGGVHCHYKAPTVMLHMTKTDPYLDNPTHV) are cytoplasmic. The Lys-Thr-X-X-X-Trp motif, mediates interaction with the PDZ domain of Dvl family members motif lies at 336–341 (KTLQTW). The short motif at 390-392 (THV) is the PDZ-binding element.

This sequence belongs to the G-protein coupled receptor Fz/Smo family.

Its subcellular location is the cell membrane. In terms of biological role, receptor for WNT2 that is coupled to the beta-catenin canonical signaling pathway, which leads to the activation of disheveled proteins, inhibition of GSK-3 kinase, nuclear accumulation of beta-catenin and activation of Wnt target genes. In Gallus gallus (Chicken), this protein is Frizzled-9 (FZD9).